Consider the following 868-residue polypeptide: Ionotropic receptor 93a (868 aa).

The first 28 residues, 1–28 (MNPGEMRPSACLLLLAGLQLSILVPTEA), serve as a signal peptide directing secretion. Residues 29–565 (NDFSSFLSAN…ITRKPDEVSR (537 aa)) lie on the Extracellular side of the membrane. 8 N-linked (GlcNAc...) asparagine glycosylation sites follow: Asn38, Asn205, Asn294, Asn305, Asn432, Asn475, Asn499, and Asn543. A helical transmembrane segment spans residues 566–586 (IYLFTAPFTVETWFCLMGIIL). Residues 587 to 642 (LTAPTLYAINRLAPLKEMRIVGLSTVKSCFWYIFGALLQQGGMYLPTADSGRLVVG) are Cytoplasmic-facing. The chain crosses the membrane as a helical span at residues 643–663 (FWWIVVIVLVTTYCGNLVAFL). The Extracellular segment spans residues 664–832 (TFPKFQPGVD…HKVNMDDMQG (169 aa)). N-linked (GlcNAc...) asparagine glycosylation is present at Asn691. The chain crosses the membrane as a helical span at residues 833 to 853 (CFLVLLLGFTLALLIVCGEFW). The Cytoplasmic portion of the chain corresponds to 854-868 (YRRFRASRKRRQFTN).

It belongs to the glutamate-gated ion channel (TC 1.A.10.1) family. In terms of tissue distribution, in the antenna, detected in sacculus neurons which innervate the first and second chambers (at protein level). Expressed in multiple cells of the larval dorsal organ ganglion, including the dorsal organ cool cells where it is predominately localized to the dendritic bulbs (at protein level).

It localises to the cell membrane. Its function is as follows. Integral part of various neural sensory systems in the antenna that provide the neural basis for the response to environmental changes in temperature (thermosensation) and humidity (hygrosensation). Together with Ir21a and Ir25a, mediates the response of the larval dorsal organ cool cells, a trio of cool-responsive neurons, to cooling and is required for cool avoidance behavior. Together with Ir25a and Ir40a, mediates the response of the hydrosensory sacculus neurons to changes in relative humidity, and is required for dry detection and humidiy preference behavior. In Drosophila melanogaster (Fruit fly), this protein is Ionotropic receptor 93a.